Here is a 134-residue protein sequence, read N- to C-terminus: uncharacterized protein (134 aa).

3 consecutive transmembrane segments (helical) span residues 5 to 25, 30 to 50, and 62 to 82; these read FGIF…FGGF, LILL…ETII, and LVKK…DQLL.

Belongs to the bacteriophage holin family. Cp-1 holin subfamily.

Its subcellular location is the cell membrane. This is an uncharacterized protein from Bacillus subtilis (strain 168).